Consider the following 261-residue polypeptide: Fructoselysine 6-kinase (261 aa).

It belongs to the carbohydrate kinase PfkB family. Monomer.

The catalysed reaction is N(6)-(D-fructosyl)-L-lysine + ATP = N(6)-(6-phospho-D-fructosyl)-L-lysine + ADP + H(+). Its pathway is carbohydrate metabolism; fructoselysine degradation; D-glucose 6-phosphate and lysine from fructoselysine: step 1/2. Functionally, catalyzes the ATP-dependent phosphorylation of fructoselysine to fructoselysine 6-phosphate. May function in a fructoselysine degradation pathway that allows S.flexneri to grow on fructoselysine or psicoselysine. In Shigella flexneri, this protein is Fructoselysine 6-kinase (frlD).